A 300-amino-acid polypeptide reads, in one-letter code: Cholesterol 25-hydroxylase-like protein (300 aa).

N9 is a glycosylation site (N-linked (GlcNAc...) asparagine). The next 3 membrane-spanning stretches (helical) occupy residues 54–73 (YTWVAVFTFIDVFLCNVPFF), 95–115 (LQGWNQLLWIYPMALVQLIWV), and 130–152 (MLSQLAIFFLAFDFTYFWFHYIN). Residues 135–266 (AIFFLAFDFT…WFNYLDRLMG (132 aa)) enclose the Fatty acid hydroxylase domain. The Histidine box-1 signature appears at 148 to 152 (FHYIN). A Histidine box-2 motif is present at residues 163–167 (HSVHH). The helical transmembrane segment at 192–212 (ITTIPWIFPTHCLTYWIWFFI) threads the bilayer. The Histidine box-3 motif lies at 242–248 (AHDMHHL).

It belongs to the sterol desaturase family. Fe cation is required as a cofactor.

It localises to the membrane. In terms of biological role, probable sterol desaturase. In Caenorhabditis elegans, this protein is Cholesterol 25-hydroxylase-like protein.